Reading from the N-terminus, the 423-residue chain is CinA-like protein (423 aa).

The protein belongs to the CinA family.

This Desulforapulum autotrophicum (strain ATCC 43914 / DSM 3382 / VKM B-1955 / HRM2) (Desulfobacterium autotrophicum) protein is CinA-like protein.